The sequence spans 962 residues: Leucine-rich repeat-containing G-protein coupled receptor 6 (962 aa).

Positions 1–16 (MLVVLLILHAVSCAHS) are cleaved as a signal peptide. The LRRNT domain maps to 20–60 (PGAAVPVKQCPSACQCEEDGILLLVDCSEQGLSSVPTDLSP). LRR repeat units follow at residues 38 to 58 (DGIL…PTDL), 59 to 82 (SPLT…AFRN), 83 to 106 (LHFL…MLQG), 107 to 131 (LYNL…PWEL), 133 to 154 (NLLS…TLSG), 155 to 178 (MRSL…ALND), 179 to 202 (LSSL…AFRN), 203 to 226 (LSNL…CFEG), 228 to 250 (HSLE…IRTL), 251 to 273 (AKLQ…AFVG), 275 to 297 (PLLQ…AFQF), 298 to 321 (LPKL…LKGT), 322 to 344 (TSLQ…LCHL), 345 to 368 (LPKL…YHCT), 370 to 390 (LQEI…TFQQ), 391 to 414 (LGSL…AFFS), and 416 to 438 (QSLI…GLTS). An N-linked (GlcNAc...) asparagine glycan is attached at N71. N202 is a glycosylation site (N-linked (GlcNAc...) asparagine). 7 helical membrane passes run 559–579 (GMWL…LTVF), 590–610 (FIIG…GTLA), 647–669 (SILF…RAYG), 679–699 (AAAV…LIGV), 723–743 (FMVA…GTYI), 766–786 (VAWL…LTFS), and 801–821 (SVVL…YLLF). C633 and C708 are disulfide-bonded.

Belongs to the G-protein coupled receptor 1 family.

Its subcellular location is the cell membrane. In terms of biological role, receptor for R-spondins that potentiates the canonical Wnt signaling pathway. Upon binding to R-spondins (rspo1, rspo2, rspo3 or rspo4), associates with phosphorylated lrp6 and frizzled receptors that are activated by extracellular Wnt receptors, triggering the canonical Wnt signaling pathway to increase expression of target genes. In contrast to classical G-protein coupled receptors, does not activate heterotrimeric G-proteins to transduce the signal. The chain is Leucine-rich repeat-containing G-protein coupled receptor 6 (lgr6) from Danio rerio (Zebrafish).